A 43-amino-acid polypeptide reads, in one-letter code: uncharacterized protein (43 aa).

This is an uncharacterized protein from Rickettsia prowazekii (strain Madrid E).